The following is a 133-amino-acid chain: UPF0102 protein bll0669 (133 aa).

This sequence belongs to the UPF0102 family.

This Bradyrhizobium diazoefficiens (strain JCM 10833 / BCRC 13528 / IAM 13628 / NBRC 14792 / USDA 110) protein is UPF0102 protein bll0669.